We begin with the raw amino-acid sequence, 382 residues long: MRLSTHPTLDRFDAVPAASYRPGHGAVRAWLYLLAVLVVAMVAVGGATRLTGSGLSITEWRPVTGVVPPLDAADWAVEFDKYRDTPQYRILNQGIGLDGFKTLYWWEWGHRLLGRIVGLVFFLPFAWFWARGMLGRRLLLGLLGLGLLGGLQGAIGWIMVASGLQPGMTAVAPLKLALHLTTASLILAGLVWLAAGTRPRALAPAPEPVRVVAGLLPALVLVQIWLGGLVAGSKAGLLYNTWPDMDGVLVPPARVLFDKVPFIENFIDNLALVQFNHRLFAYLVVVVAIAHAIQAARTASGSAAAGRAMGLAALATAQMGLGIATLLLHVPLWAGLAHQVFAMAVLIMATVHARLARGVPAATAPTGAEVPIGLEALAGRGA.

The next 8 helical transmembrane spans lie at 25–45 (GAVR…VAVG), 112–132 (LLGR…WARG), 138–158 (LLLG…IGWI), 176–196 (LALH…LAAG), 211–231 (VVAG…GLVA), 270–290 (LALV…VAIA), 303–323 (AAAG…GLGI), and 327–347 (LLHV…AVLI). Histidine 277 lines the heme pocket. Histidine 338 contributes to the heme binding site.

It belongs to the COX15/CtaA family. Type 2 subfamily. As to quaternary structure, interacts with CtaB. It depends on heme b as a cofactor.

The protein resides in the cell membrane. The enzyme catalyses Fe(II)-heme o + 2 A + H2O = Fe(II)-heme a + 2 AH2. Its pathway is porphyrin-containing compound metabolism; heme A biosynthesis; heme A from heme O: step 1/1. Catalyzes the conversion of heme O to heme A by two successive hydroxylations of the methyl group at C8. The first hydroxylation forms heme I, the second hydroxylation results in an unstable dihydroxymethyl group, which spontaneously dehydrates, resulting in the formyl group of heme A. The chain is Heme A synthase from Methylorubrum extorquens (strain PA1) (Methylobacterium extorquens).